We begin with the raw amino-acid sequence, 86 residues long: MAQKKGGGSTRNGRDSESKRLGVKVFGGEHINAGSIIIRQRGTRVHPGANVGIGKDHTLFALIDGQVEFGVKGALKKAQVSVLPRS.

Residues 1–10 (MAQKKGGGST) are compositionally biased toward gly residues. The tract at residues 1–22 (MAQKKGGGSTRNGRDSESKRLG) is disordered.

This sequence belongs to the bacterial ribosomal protein bL27 family.

The protein is Large ribosomal subunit protein bL27 of Polynucleobacter asymbioticus (strain DSM 18221 / CIP 109841 / QLW-P1DMWA-1) (Polynucleobacter necessarius subsp. asymbioticus).